The sequence spans 126 residues: MEKKIALIAHDKKKEDLVNFVKQNYLFLSKFKLIATGTTGSKIQQATDLTIFKYKSGPMGGDQQIGAEVAEGNILAIFFFRDPLTSQPHEPDVSALIRLCDVHKIPLATNVKTAEILIKGLESLIF.

In terms of domain architecture, MGS-like spans 1–126 (MEKKIALIAH…LIKGLESLIF (126 aa)). Residues histidine 10, lysine 14, 36–39 (TGTT), and 56–57 (SG) contribute to the substrate site. The active-site Proton donor/acceptor is the aspartate 62. Histidine 89 lines the substrate pocket.

Belongs to the methylglyoxal synthase family.

It carries out the reaction dihydroxyacetone phosphate = methylglyoxal + phosphate. Catalyzes the formation of methylglyoxal from dihydroxyacetone phosphate. The protein is Methylglyoxal synthase of Borreliella burgdorferi (strain ATCC 35210 / DSM 4680 / CIP 102532 / B31) (Borrelia burgdorferi).